The sequence spans 418 residues: N-acetylglucosamine-6-phosphate deacetylase (418 aa).

Glutamate 154 contributes to the a divalent metal cation binding site. 165-166 (CH) contributes to the substrate binding site. The a divalent metal cation site is built by histidine 223 and histidine 244. Substrate-binding positions include 247–248 (NA), arginine 255, and 281–284 (DGIH). Aspartate 306 (proton donor/acceptor) is an active-site residue. 340–342 (TAG) provides a ligand contact to substrate.

It belongs to the metallo-dependent hydrolases superfamily. NagA family. Requires a divalent metal cation as cofactor.

It carries out the reaction N-acetyl-D-glucosamine 6-phosphate + H2O = D-glucosamine 6-phosphate + acetate. The polypeptide is N-acetylglucosamine-6-phosphate deacetylase (Caenorhabditis elegans).